We begin with the raw amino-acid sequence, 703 residues long: Elongation factor G 1 (703 aa).

In terms of domain architecture, tr-type G spans 8–291 (ERYRNIGISA…AVIDYLPSPV (284 aa)). GTP-binding positions include 17–24 (AHIDAGKT), 88–92 (DTPGH), and 142–145 (NKMD).

The protein belongs to the TRAFAC class translation factor GTPase superfamily. Classic translation factor GTPase family. EF-G/EF-2 subfamily.

The protein resides in the cytoplasm. In terms of biological role, catalyzes the GTP-dependent ribosomal translocation step during translation elongation. During this step, the ribosome changes from the pre-translocational (PRE) to the post-translocational (POST) state as the newly formed A-site-bound peptidyl-tRNA and P-site-bound deacylated tRNA move to the P and E sites, respectively. Catalyzes the coordinated movement of the two tRNA molecules, the mRNA and conformational changes in the ribosome. This Burkholderia orbicola (strain AU 1054) protein is Elongation factor G 1.